The primary structure comprises 256 residues: Alcohol dehydrogenase (256 aa).

Residue 12-35 participates in NAD(+) binding; it reads FVAGLGGIGLDTSKELVKRDLKNL. Ser-140 provides a ligand contact to substrate. The active-site Proton acceptor is Tyr-153.

This sequence belongs to the short-chain dehydrogenases/reductases (SDR) family. Homodimer.

The enzyme catalyses a primary alcohol + NAD(+) = an aldehyde + NADH + H(+). It catalyses the reaction a secondary alcohol + NAD(+) = a ketone + NADH + H(+). This chain is Alcohol dehydrogenase (Adh), found in Drosophila mauritiana (Fruit fly).